The chain runs to 374 residues: Protein-glutamate methylesterase/protein-glutamine glutaminase 1 (374 aa).

A Response regulatory domain is found at lysine 4–leucine 121. Residue aspartate 55 is modified to 4-aspartylphosphate. The tract at residues proline 141 to valine 170 is disordered. The segment covering arginine 149–serine 167 has biased composition (polar residues). One can recognise a CheB-type methylesterase domain in the interval proline 174–glycine 374. Catalysis depends on residues serine 193, histidine 220, and aspartate 316.

Belongs to the CheB family. Phosphorylated by CheA. Phosphorylation of the N-terminal regulatory domain activates the methylesterase activity.

The protein resides in the cytoplasm. It catalyses the reaction [protein]-L-glutamate 5-O-methyl ester + H2O = L-glutamyl-[protein] + methanol + H(+). The enzyme catalyses L-glutaminyl-[protein] + H2O = L-glutamyl-[protein] + NH4(+). Functionally, involved in chemotaxis. Part of a chemotaxis signal transduction system that modulates chemotaxis in response to various stimuli. Catalyzes the demethylation of specific methylglutamate residues introduced into the chemoreceptors (methyl-accepting chemotaxis proteins or MCP) by CheR. Also mediates the irreversible deamidation of specific glutamine residues to glutamic acid. The protein is Protein-glutamate methylesterase/protein-glutamine glutaminase 1 of Shewanella oneidensis (strain ATCC 700550 / JCM 31522 / CIP 106686 / LMG 19005 / NCIMB 14063 / MR-1).